The primary structure comprises 1357 residues: DNA-directed RNA polymerase subunit beta (1357 aa).

This sequence belongs to the RNA polymerase beta chain family. As to quaternary structure, the RNAP catalytic core consists of 2 alpha, 1 beta, 1 beta' and 1 omega subunit. When a sigma factor is associated with the core the holoenzyme is formed, which can initiate transcription.

It catalyses the reaction RNA(n) + a ribonucleoside 5'-triphosphate = RNA(n+1) + diphosphate. Its function is as follows. DNA-dependent RNA polymerase catalyzes the transcription of DNA into RNA using the four ribonucleoside triphosphates as substrates. The polypeptide is DNA-directed RNA polymerase subunit beta (Pseudomonas putida (strain ATCC 700007 / DSM 6899 / JCM 31910 / BCRC 17059 / LMG 24140 / F1)).